The sequence spans 309 residues: uncharacterized protein (309 aa).

To S.pombe SpAC14C4.04.

This is an uncharacterized protein from Schizosaccharomyces pombe (strain 972 / ATCC 24843) (Fission yeast).